Reading from the N-terminus, the 977-residue chain is Glutamate receptor 2 (977 aa).

The signal sequence occupies residues 1-19 (MNKNLLVFGFLIFVKIGET). At 20–621 (SKKFPLRAFV…FSFMEPLGMT (602 aa)) the chain is on the extracellular side. N-linked (GlcNAc...) asparagine glycosylation is found at Asn36, Asn227, Asn291, Asn427, Asn532, and Asn566. The chain crosses the membrane as a helical span at residues 622-642 (IWIFTLSSYFGVSLTIFLVSW). Topologically, residues 643–695 (FSPYEKRIEFKRGEFTVTNEFTLYNSLWFTLAAFMQQGTDILPRAVSGRIASS) are cytoplasmic. Residues 696-716 (CWWFFTLIIVSSYTANLAAFL) traverse the membrane as a helical segment. The Extracellular segment spans residues 717–898 (TLERMTPPIE…GTSSSLNLSK (182 aa)). Asn783 and Asn895 each carry an N-linked (GlcNAc...) asparagine glycan. A helical membrane pass occupies residues 899 to 919 (VAGIFYILLAGMVLSMCTALV). Residues 920–977 (EFLFRKNKENREKERNRMRSSRPLKPGILASCERAKQKQLQNRRTKSEEVSTPRSTLF) are Cytoplasmic-facing. Residues 954 to 977 (AKQKQLQNRRTKSEEVSTPRSTLF) are disordered.

The protein belongs to the glutamate-gated ion channel (TC 1.A.10.1) family. Command interneurons of the locomotory control circuit (AIA, AIB, AVA, AVD, AVE, PVC, RIA, RIG and RIR) and motor neurons (AVG, M1, RMDD and RMDV).

It is found in the membrane. The protein localises to the postsynaptic cell membrane. Functionally, L-glutamate acts as an excitatory neurotransmitter at many synapses in the central nervous system. The postsynaptic actions of glutamate are mediated by a variety of receptors that are named according to their selective agonists. Required for response to mechanical and osmotic stimuli. The polypeptide is Glutamate receptor 2 (glr-2) (Caenorhabditis elegans).